A 914-amino-acid chain; its full sequence is DENN domain-containing protein 2C (914 aa).

Positions 46–98 (FGVRYNCHQESPPHKRPTGEERNGALPRNTDVKSRDQSEDEGEGGECRGSHPS) are disordered. Positions 56 to 68 (SPPHKRPTGEERN) are enriched in basic and acidic residues. Ser261 is modified (phosphoserine). Residues 411-446 (GKKRVKLQPYTGKEAPSSKGETSGNESDAEYLPKNR) form a disordered region. One can recognise a uDENN domain in the interval 480-627 (ELFVVVSLQK…PFPAPGRTIT (148 aa)). The region spanning 649–782 (RLEHVDFECL…LQAALVQILE (134 aa)) is the cDENN domain. A dDENN domain is found at 784 to 874 (RDEVLAQEQQ…QDRELRQSGV (91 aa)).

Functionally, guanine nucleotide exchange factor (GEF) which may activate RAB9A and RAB9B. Promotes the exchange of GDP to GTP, converting inactive GDP-bound Rab proteins into their active GTP-bound form. This chain is DENN domain-containing protein 2C (Dennd2c), found in Mus musculus (Mouse).